The chain runs to 220 residues: LHFPL tetraspan subfamily member 1 protein (220 aa).

Residues 1–20 (MRSSLTMVGTLWAFLSLVTA) form the signal peptide. Helical transmembrane passes span 86–106 (VVTG…VLGC) and 122–142 (AAQF…PLGW). Residue asparagine 153 is glycosylated (N-linked (GlcNAc...) asparagine). Residues 165–185 (LGWAYYCAGGGAAAAMLICTW) form a helical membrane-spanning segment.

It belongs to the LHFP family. As to expression, widely expressed. Expressed at high levels in lung, thymus, skeletal muscle, colon and ovary.

It is found in the membrane. This Homo sapiens (Human) protein is LHFPL tetraspan subfamily member 1 protein.